Consider the following 193-residue polypeptide: Zinc finger protein 740 (193 aa).

The segment at 33–75 (SKQAENGERAGSPDVLRCSSQGHRKDSDKSRSRKDDDSLSEAS) is disordered. Residue Lys34 forms a Glycyl lysine isopeptide (Lys-Gly) (interchain with G-Cter in SUMO2) linkage. Ser44 bears the Phosphoserine mark. Residues 55 to 69 (HRKDSDKSRSRKDDD) are compositionally biased toward basic and acidic residues. 2 consecutive C2H2-type zinc fingers follow at residues 101 to 123 (FVCE…ILIH) and 129 to 151 (FECD…KRVH). The C2H2-type 3; atypical zinc-finger motif lies at 157 to 179 (YQCERCHQCFSRTDRLLRHKRMC).

Belongs to the krueppel C2H2-type zinc-finger protein family.

The protein resides in the nucleus. May be involved in transcriptional regulation. The protein is Zinc finger protein 740 (ZNF740) of Homo sapiens (Human).